The primary structure comprises 157 residues: 2-C-methyl-D-erythritol 2,4-cyclodiphosphate synthase (157 aa).

The a divalent metal cation site is built by Asp-8 and His-10. 4-CDP-2-C-methyl-D-erythritol 2-phosphate contacts are provided by residues 8 to 10 (DVH) and 34 to 35 (HS). His-42 is a binding site for a divalent metal cation. Residues 56–58 (DIG), 61–65 (FPDTD), 100–106 (AQAPKMA), 132–135 (TTTE), Phe-139, and Arg-142 contribute to the 4-CDP-2-C-methyl-D-erythritol 2-phosphate site.

This sequence belongs to the IspF family. In terms of assembly, homotrimer. A divalent metal cation serves as cofactor.

It carries out the reaction 4-CDP-2-C-methyl-D-erythritol 2-phosphate = 2-C-methyl-D-erythritol 2,4-cyclic diphosphate + CMP. Its pathway is isoprenoid biosynthesis; isopentenyl diphosphate biosynthesis via DXP pathway; isopentenyl diphosphate from 1-deoxy-D-xylulose 5-phosphate: step 4/6. Functionally, involved in the biosynthesis of isopentenyl diphosphate (IPP) and dimethylallyl diphosphate (DMAPP), two major building blocks of isoprenoid compounds. Catalyzes the conversion of 4-diphosphocytidyl-2-C-methyl-D-erythritol 2-phosphate (CDP-ME2P) to 2-C-methyl-D-erythritol 2,4-cyclodiphosphate (ME-CPP) with a corresponding release of cytidine 5-monophosphate (CMP). In Pseudomonas fluorescens (strain ATCC BAA-477 / NRRL B-23932 / Pf-5), this protein is 2-C-methyl-D-erythritol 2,4-cyclodiphosphate synthase.